The sequence spans 369 residues: Adenosine 3'-phospho 5'-phosphosulfate transporter 2 (369 aa).

The N-linked (GlcNAc...) asparagine glycan is linked to Asn39. A run of 6 helical transmembrane segments spans residues 46 to 66 (LTQF…YGYL), 79 to 99 (YGWY…LIEL), 115 to 135 (MLIA…LGYL), 138 to 158 (PTQV…GVFI), 168 to 188 (VSAA…DSTI), and 191 to 211 (NFNL…AVIG). Asn222 is a glycosylation site (N-linked (GlcNAc...) asparagine). Helical transmembrane passes span 235 to 255 (IGFV…PAVA), 266 to 285 (GYAF…VLAL), 292 to 314 (LLAV…LFFA), and 317 to 337 (FTFQ…LNVY).

Belongs to the nucleotide-sugar transporter family. SLC35B subfamily.

The protein resides in the golgi apparatus membrane. The enzyme catalyses 3'-phosphoadenylyl sulfate(in) + adenosine 3',5'-bisphosphate(out) = 3'-phosphoadenylyl sulfate(out) + adenosine 3',5'-bisphosphate(in). In terms of biological role, probably functions as a 3'-phosphoadenylyl sulfate:adenosine 3',5'-bisphosphate antiporter at the Golgi membranes. Mediates the transport from the cytosol into the lumen of the Golgi of 3'-phosphoadenylyl sulfate/adenosine 3'-phospho 5'-phosphosulfate (PAPS), a universal sulfuryl donor for sulfation events that take place in that compartment. This chain is Adenosine 3'-phospho 5'-phosphosulfate transporter 2, found in Mus musculus (Mouse).